The following is a 260-amino-acid chain: Small ribosomal subunit protein uS3 (260 aa).

Residues 39 to 114 (LRQYIEQKLG…QIRINVVEVQ (76 aa)) enclose the KH type-2 domain. The interval 217–260 (GQEPDPLPPASRDRERDPRDRDREPRRRQQQRRRQQFEDRSNEG) is disordered. Basic and acidic residues-rich tracts occupy residues 227-243 (SRDR…EPRR) and 251-260 (QQFEDRSNEG).

This sequence belongs to the universal ribosomal protein uS3 family. Part of the 30S ribosomal subunit. Forms a tight complex with proteins S10 and S14.

In terms of biological role, binds the lower part of the 30S subunit head. Binds mRNA in the 70S ribosome, positioning it for translation. The protein is Small ribosomal subunit protein uS3 of Nostoc punctiforme (strain ATCC 29133 / PCC 73102).